A 301-amino-acid polypeptide reads, in one-letter code: Putative hydro-lyase C5H10.01 (301 aa).

It belongs to the D-glutamate cyclase family.

This is Putative hydro-lyase C5H10.01 from Schizosaccharomyces pombe (strain 972 / ATCC 24843) (Fission yeast).